Here is a 156-residue protein sequence, read N- to C-terminus: ATP synthase subunit b (156 aa).

Residues 11–31 (AIAFILFVWFCMKYVWPPLMA) form a helical membrane-spanning segment.

The protein belongs to the ATPase B chain family. As to quaternary structure, F-type ATPases have 2 components, F(1) - the catalytic core - and F(0) - the membrane proton channel. F(1) has five subunits: alpha(3), beta(3), gamma(1), delta(1), epsilon(1). F(0) has three main subunits: a(1), b(2) and c(10-14). The alpha and beta chains form an alternating ring which encloses part of the gamma chain. F(1) is attached to F(0) by a central stalk formed by the gamma and epsilon chains, while a peripheral stalk is formed by the delta and b chains.

It is found in the cell inner membrane. In terms of biological role, f(1)F(0) ATP synthase produces ATP from ADP in the presence of a proton or sodium gradient. F-type ATPases consist of two structural domains, F(1) containing the extramembraneous catalytic core and F(0) containing the membrane proton channel, linked together by a central stalk and a peripheral stalk. During catalysis, ATP synthesis in the catalytic domain of F(1) is coupled via a rotary mechanism of the central stalk subunits to proton translocation. Component of the F(0) channel, it forms part of the peripheral stalk, linking F(1) to F(0). In Enterobacter sp. (strain 638), this protein is ATP synthase subunit b.